The primary structure comprises 376 residues: 23S rRNA (uracil(747)-C(5))-methyltransferase RlmC (376 aa).

Residues Cys3, Cys11, Cys14, and Cys88 each contribute to the [4Fe-4S] cluster site. S-adenosyl-L-methionine contacts are provided by Gln213, Phe242, Glu263, and Asn308. The active-site Nucleophile is Cys335.

Belongs to the class I-like SAM-binding methyltransferase superfamily. RNA M5U methyltransferase family. RlmC subfamily.

The catalysed reaction is uridine(747) in 23S rRNA + S-adenosyl-L-methionine = 5-methyluridine(747) in 23S rRNA + S-adenosyl-L-homocysteine + H(+). Functionally, catalyzes the formation of 5-methyl-uridine at position 747 (m5U747) in 23S rRNA. The polypeptide is 23S rRNA (uracil(747)-C(5))-methyltransferase RlmC (Vibrio vulnificus (strain YJ016)).